The following is a 398-amino-acid chain: Putative F-box protein At1g67450 (398 aa).

Residues 2-56 (TMMMSDLPNDLVEEILSRVPITSLGAVRSTCKRWNGLSKDRIVCKGDANQQFTGF) enclose the F-box domain.

The sequence is that of Putative F-box protein At1g67450 from Arabidopsis thaliana (Mouse-ear cress).